The sequence spans 76 residues: Acyl carrier protein (76 aa).

Residues 1–76 (MATFDEVKEV…AAVDYIGSKQ (76 aa)) enclose the Carrier domain. The residue at position 36 (serine 36) is an O-(pantetheine 4'-phosphoryl)serine.

Belongs to the acyl carrier protein (ACP) family. In terms of processing, 4'-phosphopantetheine is transferred from CoA to a specific serine of apo-ACP by AcpS. This modification is essential for activity because fatty acids are bound in thioester linkage to the sulfhydryl of the prosthetic group.

It localises to the cytoplasm. It functions in the pathway lipid metabolism; fatty acid biosynthesis. In terms of biological role, carrier of the growing fatty acid chain in fatty acid biosynthesis. In Deinococcus geothermalis (strain DSM 11300 / CIP 105573 / AG-3a), this protein is Acyl carrier protein.